A 341-amino-acid chain; its full sequence is Methionine import ATP-binding protein MetN 2 (341 aa).

The ABC transporter domain maps to 2–241 (IEASELTKVY…PKAPLTQEFI (240 aa)). Residue 38-45 (GYSGAGKS) coordinates ATP.

This sequence belongs to the ABC transporter superfamily. Methionine importer (TC 3.A.1.24) family. As to quaternary structure, the complex is composed of two ATP-binding proteins (MetN), two transmembrane proteins (MetI) and a solute-binding protein (MetQ).

The protein localises to the cell membrane. It carries out the reaction L-methionine(out) + ATP + H2O = L-methionine(in) + ADP + phosphate + H(+). The catalysed reaction is D-methionine(out) + ATP + H2O = D-methionine(in) + ADP + phosphate + H(+). Part of the ABC transporter complex MetNIQ involved in methionine import. Responsible for energy coupling to the transport system. The sequence is that of Methionine import ATP-binding protein MetN 2 from Shouchella clausii (strain KSM-K16) (Alkalihalobacillus clausii).